A 206-amino-acid polypeptide reads, in one-letter code: Somatotropin (206 aa).

The N-terminal stretch at 1-22 is a signal peptide; it reads MAGLHFFPALLALLMASLQTHQ. Disulfide bonds link Cys75-Cys179 and Cys196-Cys204.

It belongs to the somatotropin/prolactin family.

Its subcellular location is the secreted. Functionally, growth hormone plays an important role in growth control and is involved in the regulation of several anabolic processes. Implicated as an osmoregulatory substance important for seawater adaptation. In Protopterus annectens (African lungfish), this protein is Somatotropin (gh).